Consider the following 160-residue polypeptide: MMNNTDFLMLNNPWNKLCLVSMDFCFPLDFVSNLFWIFASKFIIVTGQIKADFKRTSWEAKAEGSLEPGRLKLQLASIVPLYSSLVTAGPASKIIILKRTSLPTVSPSNERAYLLPVSFTDLAHVFYLSYFSINAKSNSFSLDIIIALGIPHNTQAHFNH.

Residues 24 to 44 (FCFPLDFVSNLFWIFASKFII) form a helical membrane-spanning segment.

The protein belongs to the TMEM191 family.

The protein resides in the membrane. The polypeptide is Transmembrane protein 191A (TMEM191A) (Homo sapiens (Human)).